Consider the following 319-residue polypeptide: tRNA-cytidine(32) 2-sulfurtransferase (319 aa).

A PP-loop motif motif is present at residues 43-48; it reads SGGKDS. Positions 118, 121, and 209 each coordinate [4Fe-4S] cluster. The tract at residues 272 to 297 is disordered; it reads DLAFDSEKMPERFSDGSEEDESEIKI. The segment covering 276–286 has biased composition (basic and acidic residues); that stretch reads DSEKMPERFSD.

The protein belongs to the TtcA family. In terms of assembly, homodimer. It depends on Mg(2+) as a cofactor. [4Fe-4S] cluster is required as a cofactor.

The protein localises to the cytoplasm. It carries out the reaction cytidine(32) in tRNA + S-sulfanyl-L-cysteinyl-[cysteine desulfurase] + AH2 + ATP = 2-thiocytidine(32) in tRNA + L-cysteinyl-[cysteine desulfurase] + A + AMP + diphosphate + H(+). Its pathway is tRNA modification. Its function is as follows. Catalyzes the ATP-dependent 2-thiolation of cytidine in position 32 of tRNA, to form 2-thiocytidine (s(2)C32). The sulfur atoms are provided by the cysteine/cysteine desulfurase (IscS) system. The sequence is that of tRNA-cytidine(32) 2-sulfurtransferase from Neisseria gonorrhoeae (strain ATCC 700825 / FA 1090).